We begin with the raw amino-acid sequence, 388 residues long: UDP-N-acetylglucosamine--N-acetylmuramyl-(pentapeptide) pyrophosphoryl-undecaprenol N-acetylglucosamine transferase (388 aa).

Residues 42 to 44 (TGG), Asn-159, Arg-195, Ser-223, Ile-277, and Gln-322 contribute to the UDP-N-acetyl-alpha-D-glucosamine site.

The protein belongs to the glycosyltransferase 28 family. MurG subfamily.

The protein localises to the cell inner membrane. The catalysed reaction is di-trans,octa-cis-undecaprenyl diphospho-N-acetyl-alpha-D-muramoyl-L-alanyl-D-glutamyl-meso-2,6-diaminopimeloyl-D-alanyl-D-alanine + UDP-N-acetyl-alpha-D-glucosamine = di-trans,octa-cis-undecaprenyl diphospho-[N-acetyl-alpha-D-glucosaminyl-(1-&gt;4)]-N-acetyl-alpha-D-muramoyl-L-alanyl-D-glutamyl-meso-2,6-diaminopimeloyl-D-alanyl-D-alanine + UDP + H(+). It functions in the pathway cell wall biogenesis; peptidoglycan biosynthesis. Functionally, cell wall formation. Catalyzes the transfer of a GlcNAc subunit on undecaprenyl-pyrophosphoryl-MurNAc-pentapeptide (lipid intermediate I) to form undecaprenyl-pyrophosphoryl-MurNAc-(pentapeptide)GlcNAc (lipid intermediate II). The polypeptide is UDP-N-acetylglucosamine--N-acetylmuramyl-(pentapeptide) pyrophosphoryl-undecaprenol N-acetylglucosamine transferase (Albidiferax ferrireducens (strain ATCC BAA-621 / DSM 15236 / T118) (Rhodoferax ferrireducens)).